We begin with the raw amino-acid sequence, 215 residues long: Urease accessory protein UreG (215 aa).

The tract at residues 1–21 is disordered; sequence MNAPASSPARRTKKLPPLRVG. Residue 24–31 coordinates GTP; sequence GPVGSGKT.

This sequence belongs to the SIMIBI class G3E GTPase family. UreG subfamily. In terms of assembly, homodimer. UreD, UreF and UreG form a complex that acts as a GTP-hydrolysis-dependent molecular chaperone, activating the urease apoprotein by helping to assemble the nickel containing metallocenter of UreC. The UreE protein probably delivers the nickel.

It localises to the cytoplasm. Facilitates the functional incorporation of the urease nickel metallocenter. This process requires GTP hydrolysis, probably effectuated by UreG. This is Urease accessory protein UreG from Burkholderia vietnamiensis (strain G4 / LMG 22486) (Burkholderia cepacia (strain R1808)).